The primary structure comprises 482 residues: Protein trichome birefringence-like 15 (482 aa).

A helical; Signal-anchor for type II membrane protein membrane pass occupies residues 109 to 129 (GSVSLSLIILILLVTTLLVSA). Residues 217–219 (GDS) carry the GDS motif motif. Residues 461–475 (DCLHWCLPGIPDTWN) carry the DCXHWCLPGXXDXWN motif motif.

This sequence belongs to the PC-esterase family. TBL subfamily.

It is found in the membrane. May act as a bridging protein that binds pectin and other cell wall polysaccharides. Probably involved in maintaining esterification of pectins. May be involved in the specific O-acetylation of cell wall polymers. This Arabidopsis thaliana (Mouse-ear cress) protein is Protein trichome birefringence-like 15 (TBL15).